We begin with the raw amino-acid sequence, 265 residues long: Orotidine 5'-phosphate decarboxylase (265 aa).

Residues Asp-38, 60–62 (KTH), 92–101 (DRKFADIGKT), Tyr-218, and Arg-236 contribute to the substrate site. Lys-94 serves as the catalytic Proton donor.

The protein belongs to the OMP decarboxylase family.

The catalysed reaction is orotidine 5'-phosphate + H(+) = UMP + CO2. The protein operates within pyrimidine metabolism; UMP biosynthesis via de novo pathway; UMP from orotate: step 2/2. The chain is Orotidine 5'-phosphate decarboxylase (URA3) from Cyberlindnera fabianii (Yeast).